The following is a 281-amino-acid chain: Octanoyl-[GcvH]:protein N-octanoyltransferase (281 aa).

In terms of domain architecture, BPL/LPL catalytic spans 44–250 (GESAATMRSW…TLQQFAPKLT (207 aa)). Cys149 acts as the Acyl-thioester intermediate in catalysis.

The protein belongs to the octanoyltransferase LipL family.

It carries out the reaction N(6)-octanoyl-L-lysyl-[glycine-cleavage complex H protein] + L-lysyl-[lipoyl-carrier protein] = N(6)-octanoyl-L-lysyl-[lipoyl-carrier protein] + L-lysyl-[glycine-cleavage complex H protein]. Its pathway is protein modification; protein lipoylation via endogenous pathway; protein N(6)-(lipoyl)lysine from octanoyl-[acyl-carrier-protein]. In terms of biological role, catalyzes the amidotransfer (transamidation) of the octanoyl moiety from octanoyl-GcvH to the lipoyl domain of the E2 subunit of lipoate-dependent enzymes. The protein is Octanoyl-[GcvH]:protein N-octanoyltransferase of Bacillus anthracis.